Here is a 227-residue protein sequence, read N- to C-terminus: MNLSFFDQFLSPSLLGIPLIAMAIMIPWLIFPTPTNRWLNNRLMTVQSWFINRFTYQLMQPMNFGGHKWATILTALMLFLITINLLGLLPYTFTPTTQLSLNMAFAIPLWLTTVLIGMLNQPTVALGHLLPEGTPTLLIPILIIIETISLFIRPLALGVRLTANLTAGHLLMQLIATAAFVLITIMPTVALLTSLILFLLTILEVAVAMIQAYVFVLLLSLYLQENV.

6 helical membrane-spanning segments follow: residues 14–34 (LLGI…FPTP), 69–89 (WATI…LGLL), 99–119 (LSLN…IGML), 137–157 (LLIP…PLAL), 180–200 (FVLI…LFLL), and 202–222 (ILEV…LSLY).

It belongs to the ATPase A chain family. In terms of assembly, component of the ATP synthase complex composed at least of ATP5F1A/subunit alpha, ATP5F1B/subunit beta, ATP5MC1/subunit c (homooctomer), MT-ATP6/subunit a, MT-ATP8/subunit 8, ATP5ME/subunit e, ATP5MF/subunit f, ATP5MG/subunit g, ATP5MK/subunit k, ATP5MJ/subunit j, ATP5F1C/subunit gamma, ATP5F1D/subunit delta, ATP5F1E/subunit epsilon, ATP5PF/subunit F6, ATP5PB/subunit b, ATP5PD/subunit d, ATP5PO/subunit OSCP. ATP synthase complex consists of a soluble F(1) head domain (subunits alpha(3) and beta(3)) - the catalytic core - and a membrane F(0) domain - the membrane proton channel (subunits c, a, 8, e, f, g, k and j). These two domains are linked by a central stalk (subunits gamma, delta, and epsilon) rotating inside the F1 region and a stationary peripheral stalk (subunits F6, b, d, and OSCP). Interacts with DNAJC30; interaction is direct.

The protein resides in the mitochondrion inner membrane. It carries out the reaction H(+)(in) = H(+)(out). In terms of biological role, subunit a, of the mitochondrial membrane ATP synthase complex (F(1)F(0) ATP synthase or Complex V) that produces ATP from ADP in the presence of a proton gradient across the membrane which is generated by electron transport complexes of the respiratory chain. ATP synthase complex consist of a soluble F(1) head domain - the catalytic core - and a membrane F(1) domain - the membrane proton channel. These two domains are linked by a central stalk rotating inside the F(1) region and a stationary peripheral stalk. During catalysis, ATP synthesis in the catalytic domain of F(1) is coupled via a rotary mechanism of the central stalk subunits to proton translocation. With the subunit c (ATP5MC1), forms the proton-conducting channel in the F(0) domain, that contains two crucial half-channels (inlet and outlet) that facilitate proton movement from the mitochondrial intermembrane space (IMS) into the matrix. Protons are taken up via the inlet half-channel and released through the outlet half-channel, following a Grotthuss mechanism. The sequence is that of ATP synthase F(0) complex subunit a from Squalus acanthias (Spiny dogfish).